A 260-amino-acid polypeptide reads, in one-letter code: uncharacterized protein (260 aa).

An N-terminal signal peptide occupies residues 1–22; it reads MGNIKSFALYISILLLIVVVAG. Cysteine 23 carries the N-palmitoyl cysteine lipid modification. A lipid anchor (S-diacylglycerol cysteine) is attached at cysteine 23.

The protein belongs to the staphylococcal tandem lipoprotein family.

It localises to the cell membrane. This is an uncharacterized protein from Staphylococcus aureus (strain MRSA252).